Consider the following 97-residue polypeptide: Co-chaperonin GroES (97 aa).

The protein belongs to the GroES chaperonin family. In terms of assembly, heptamer of 7 subunits arranged in a ring. Interacts with the chaperonin GroEL.

It localises to the cytoplasm. In terms of biological role, together with the chaperonin GroEL, plays an essential role in assisting protein folding. The GroEL-GroES system forms a nano-cage that allows encapsulation of the non-native substrate proteins and provides a physical environment optimized to promote and accelerate protein folding. GroES binds to the apical surface of the GroEL ring, thereby capping the opening of the GroEL channel. The polypeptide is Co-chaperonin GroES (Buchnera aphidicola subsp. Pterocomma populeum).